Here is a 340-residue protein sequence, read N- to C-terminus: Ephrin-B3 (340 aa).

The signal sequence occupies residues 1 to 27; the sequence is MGAPHFGPGGVQVGALLLLGFAGLVSG. Positions 28-167 constitute an Ephrin RBD domain; sequence LSLEPVYWNS…TRGMKVLLRV (140 aa). Residues 28-227 are Extracellular-facing; sequence LSLEPVYWNS…GPLPPPSMPA (200 aa). Intrachain disulfides connect C62–C104 and C92–C156. Residues 168–227 form a disordered region; it reads GQSPRGGAVPRKPVSEMPMERDRGAAHSAEPGRDTIPGDPSSNATSRGAEGPLPPPSMPA. The span at 185-200 shows a compositional bias: basic and acidic residues; sequence PMERDRGAAHSAEPGR. Residue N210 is glycosylated (N-linked (GlcNAc...) asparagine). Residues 228 to 248 traverse the membrane as a helical segment; sequence VAGAAGGMALLLLGVAGAGGA. The Cytoplasmic portion of the chain corresponds to 249–340; that stretch reads MCWRRRRAKP…QSPPNIYYKV (92 aa). A disordered region spans residues 254 to 300; the sequence is RRAKPSESRHPGPGSFGRGGSLGLGGGGGMGPREAEPGELGIALRGG. Gly residues predominate over residues 267–284; that stretch reads GSFGRGGSLGLGGGGGMG. The residue at position 271 (R271) is an Omega-N-methylarginine. Position 274 is a phosphoserine (S274). The PDZ-binding signature appears at 338–340; that stretch reads YKV.

It belongs to the ephrin family. Interacts with GRIP1 and GRIP2. In terms of tissue distribution, expressed on lateral floor plate cells, specifically on commissural axon segments that have passed through the floor plate. Expressed in cells of the retinal ganglion cell layer during retinal axon guidance to the optic disk. Expressed in myogenic progenitor cells.

The protein localises to the membrane. In terms of biological role, cell surface transmembrane ligand for Eph receptors, a family of receptor tyrosine kinases which are crucial for migration, repulsion and adhesion during neuronal, vascular and epithelial development. Binds promiscuously Eph receptors residing on adjacent cells, leading to contact-dependent bidirectional signaling into neighboring cells. The signaling pathway downstream of the receptor is referred to as forward signaling while the signaling pathway downstream of the ephrin ligand is referred to as reverse signaling. May play a pivotal role in forebrain function. Binds to, and induce the collapse of, commissural axons/growth cones in vitro. May play a role in constraining the orientation of longitudinally projecting axons. The protein is Ephrin-B3 (Efnb3) of Mus musculus (Mouse).